The primary structure comprises 360 residues: Dihydroorotate dehydrogenase (quinone) (360 aa).

FMN-binding positions include 65-69 (AGLDK) and T89. Residue K69 participates in substrate binding. Position 114-118 (114-118 (NRLGF)) interacts with substrate. 2 residues coordinate FMN: N147 and N180. N180 is a binding site for substrate. Catalysis depends on S183, which acts as the Nucleophile. N185 is a substrate binding site. FMN contacts are provided by K225 and T253. 254-255 (NT) is a binding site for substrate. FMN contacts are provided by residues G276, G305, and 326–327 (YT).

The protein belongs to the dihydroorotate dehydrogenase family. Type 2 subfamily. In terms of assembly, monomer. It depends on FMN as a cofactor.

It localises to the cell membrane. The catalysed reaction is (S)-dihydroorotate + a quinone = orotate + a quinol. It participates in pyrimidine metabolism; UMP biosynthesis via de novo pathway; orotate from (S)-dihydroorotate (quinone route): step 1/1. Catalyzes the conversion of dihydroorotate to orotate with quinone as electron acceptor. The sequence is that of Dihydroorotate dehydrogenase (quinone) from Verminephrobacter eiseniae (strain EF01-2).